The chain runs to 568 residues: Potassium-transporting ATPase potassium-binding subunit (568 aa).

Transmembrane regions (helical) follow at residues 3–23, 68–88, 133–153, 180–200, 256–276, 281–301, 375–395, 421–441, 497–517, and 535–555; these read TEVLGVIAQIVLMVVLSYPLG, LLVVNLFWFLWGMVLLVTQGV, FVIMLFQFITAATGMAAMAGI, LLPLSLVVGFILIVQGTPMGF, VECWSILIIPMAMAFAFGFYL, LGYSIYGVMLFAYLVGVCINV, FGGVGVGWMNYFTFIIIAVFI, IVALLHPFIILVGTALAAYLF, IVLILGRFVPIVGQVAIAGIL, and VTFGVMTFAVIFIVAALSFFP.

The protein belongs to the KdpA family. The system is composed of three essential subunits: KdpA, KdpB and KdpC.

It localises to the cell inner membrane. Its function is as follows. Part of the high-affinity ATP-driven potassium transport (or Kdp) system, which catalyzes the hydrolysis of ATP coupled with the electrogenic transport of potassium into the cytoplasm. This subunit binds the periplasmic potassium ions and delivers the ions to the membrane domain of KdpB through an intramembrane tunnel. The polypeptide is Potassium-transporting ATPase potassium-binding subunit (Phocaeicola vulgatus (strain ATCC 8482 / DSM 1447 / JCM 5826 / CCUG 4940 / NBRC 14291 / NCTC 11154) (Bacteroides vulgatus)).